The sequence spans 425 residues: Glutamyl-tRNA reductase (425 aa).

Substrate-binding positions include T49–R52, S109, E114–Q116, and Q120. C50 acts as the Nucleophile in catalysis. G189–S194 contributes to the NADP(+) binding site.

This sequence belongs to the glutamyl-tRNA reductase family. In terms of assembly, homodimer.

It catalyses the reaction (S)-4-amino-5-oxopentanoate + tRNA(Glu) + NADP(+) = L-glutamyl-tRNA(Glu) + NADPH + H(+). It participates in porphyrin-containing compound metabolism; protoporphyrin-IX biosynthesis; 5-aminolevulinate from L-glutamyl-tRNA(Glu): step 1/2. The protein operates within porphyrin-containing compound metabolism; chlorophyll biosynthesis. In terms of biological role, catalyzes the NADPH-dependent reduction of glutamyl-tRNA(Glu) to glutamate 1-semialdehyde (GSA). This chain is Glutamyl-tRNA reductase, found in Picosynechococcus sp. (strain ATCC 27264 / PCC 7002 / PR-6) (Agmenellum quadruplicatum).